The primary structure comprises 162 residues: Protein A49 (162 aa).

This sequence belongs to the poxviridae A49 protein family.

The chain is Protein A49 from Variola virus (isolate Human/India/Ind3/1967) (VARV).